We begin with the raw amino-acid sequence, 1451 residues long: Copper-transporting ATPase 2 (1451 aa).

Residues 1 to 646 are Cytoplasmic-facing; the sequence is MPEQERKVTA…KTEIKQWKKS (646 aa). HMA domains are found at residues 57 to 123, 142 to 208, and 256 to 322; these read TTGV…FEAS, AVVK…FEAA, and ATLP…PGYF. Residues cysteine 68, cysteine 71, cysteine 153, cysteine 156, cysteine 267, and cysteine 270 each coordinate Cu(+). Residues 328 to 353 are disordered; it reads DGLEKESGSSSVPSLGSSQRQQEPGP. The segment covering 335–345 has biased composition (low complexity); the sequence is GSSSVPSLGSS. One can recognise an HMA 4 domain in the interval 355-421; the sequence is RTAVLTITGI…AVEDMGFEVS (67 aa). Phosphoserine occurs at positions 469, 471, and 474. 2 consecutive HMA domains span residues 481 to 547 and 557 to 623; these read QKCF…FEAA and GDIE…FHAS. The Cu(+) site is built by cysteine 492, cysteine 495, cysteine 568, and cysteine 571. The helical transmembrane segment at 647 to 668 threads the bilayer; sequence FLCSLVFGIPVMGLMIYMLIPS. Residues 669–690 are Extracellular-facing; the sequence is SKPHETMVLDHNIIPGLSVLNL. A helical transmembrane segment spans residues 691–710; it reads IFFILCTFVQFLGGWYFYVQ. Over 711-717 the chain is Cytoplasmic; sequence AYKSLRH. A helical transmembrane segment spans residues 718–738; the sequence is KSANMDVLIVLATTIAYAYSL. The Extracellular portion of the chain corresponds to 739–757; sequence VILVVAIAEKAEKSPVTFF. A helical membrane pass occupies residues 758–778; it reads DTPPMLFVFIALGRWLEHVAK. The Cytoplasmic segment spans residues 779–912; that stretch reads SKTSEALAKL…KAPIQQLADR (134 aa). Residues 913–935 form a helical membrane-spanning segment; it reads FSGYFVPFIIIISTLTLVVWIII. Residues 936–965 lie on the Extracellular side of the membrane; that stretch reads GFVDFGIVQKYFPSPSKHISQTEVIIRFAF. The helical transmembrane segment at 966–987 threads the bilayer; it reads QTSITVLCIACPCSLGLATPTA. Over 988-1310 the chain is Cytoplasmic; the sequence is VMVGTGVAAQ…LSKRTVRRIR (323 aa). The 4-aspartylphosphate intermediate role is filled by aspartate 1020. Residues aspartate 1255 and aspartate 1259 each coordinate Mg(2+). A helical transmembrane segment spans residues 1311-1328; it reads VNLVLALIYNMVGIPIAA. Residues 1329-1339 lie on the Extracellular side of the membrane; the sequence is GVFMPIGIVLQ. The helical transmembrane segment at 1340–1357 threads the bilayer; the sequence is PWMGSAAASSVSVVLSSL. Residues 1358–1451 are Cytoplasmic-facing; sequence QLKCYRKPDL…LSDRDEEQCI (94 aa). Phosphoserine occurs at positions 1384 and 1443.

The protein belongs to the cation transport ATPase (P-type) (TC 3.A.3) family. Type IB subfamily. As to quaternary structure, monomer. Interacts with COMMD1/MURR1. Interacts with DCTN4, in a copper-dependent manner. Interacts with ATOX1. Interacts (via C-terminus) with ZBTB16/PLZF. In terms of tissue distribution, expressed in brain, liver, kidney, spleen and stomach. In brain, detected in neuronal cells of the hippocampal formation, olfactory bulbs, cerebellum, cerebral cortex and nuclei in the brainstem. Isoform PINA is expressed during night in adult pineal gland (pinealocytes) and retina. Isoform PINA is not detected in other tissue.

The protein resides in the golgi apparatus. It localises to the trans-Golgi network membrane. It is found in the late endosome. It carries out the reaction Cu(+)(in) + ATP + H2O = Cu(+)(out) + ADP + phosphate + H(+). Copper ion transmembrane transporter involved in the export of copper out of the cells, such as the efflux of hepatic copper into the bile. The sequence is that of Copper-transporting ATPase 2 (Atp7b) from Rattus norvegicus (Rat).